The primary structure comprises 66 residues: Large ribosomal subunit protein bL35c (66 aa).

It belongs to the bacterial ribosomal protein bL35 family.

It is found in the plastid. The protein localises to the chloroplast. This chain is Large ribosomal subunit protein bL35c, found in Gracilaria tenuistipitata var. liui (Red alga).